The following is a 122-amino-acid chain: Large ribosomal subunit protein uL14 (122 aa).

This sequence belongs to the universal ribosomal protein uL14 family. As to quaternary structure, part of the 50S ribosomal subunit. Forms a cluster with proteins L3 and L19. In the 70S ribosome, L14 and L19 interact and together make contacts with the 16S rRNA in bridges B5 and B8.

Its function is as follows. Binds to 23S rRNA. Forms part of two intersubunit bridges in the 70S ribosome. The polypeptide is Large ribosomal subunit protein uL14 (Stutzerimonas stutzeri (strain A1501) (Pseudomonas stutzeri)).